The sequence spans 1150 residues: ATP-dependent helicase/deoxyribonuclease subunit B (1150 aa).

Residue 8–15 (GRAGSGKS) participates in ATP binding. [4Fe-4S] cluster contacts are provided by cysteine 786, cysteine 1106, cysteine 1109, and cysteine 1115.

It belongs to the helicase family. AddB/RexB type 1 subfamily. Heterodimer of AddA and AddB. Mg(2+) serves as cofactor. Requires [4Fe-4S] cluster as cofactor.

In terms of biological role, the heterodimer acts as both an ATP-dependent DNA helicase and an ATP-dependent, dual-direction single-stranded exonuclease. Recognizes the chi site generating a DNA molecule suitable for the initiation of homologous recombination. The AddB subunit has 5' -&gt; 3' nuclease activity but not helicase activity. In Clostridium botulinum (strain Hall / ATCC 3502 / NCTC 13319 / Type A), this protein is ATP-dependent helicase/deoxyribonuclease subunit B.